The sequence spans 213 residues: MGCFITFEGVEGCGKTTQIKLLAQHLTEQGHTVIVTREPGGCPIADQARAILLDADNRAMTPTTELLLYAAARAQHVQEIVKPALAANKVVLCDRFTDATIAYQGYGRGLDPATIAYLNDLATDGLKPRLTVLLDCPVEVGLKRAFDRINGAAGAREERFELESVLFHRKVRDGYLKLAEDEPERFIIIDGSQGVQETEAAITAAVLARLAEG.

Residue Gly-9–Thr-16 coordinates ATP.

It belongs to the thymidylate kinase family.

The enzyme catalyses dTMP + ATP = dTDP + ADP. In terms of biological role, phosphorylation of dTMP to form dTDP in both de novo and salvage pathways of dTTP synthesis. This Geotalea uraniireducens (strain Rf4) (Geobacter uraniireducens) protein is Thymidylate kinase.